The following is a 364-amino-acid chain: Pyrimidine monooxygenase RutA (364 aa).

Residues 49 to 50 (IK), Asn115, Glu124, 140 to 141 (RY), and Ser190 each bind FMN.

This sequence belongs to the NtaA/SnaA/DszA monooxygenase family. RutA subfamily.

It carries out the reaction uracil + FMNH2 + NADH + O2 = (Z)-3-ureidoacrylate + FMN + NAD(+) + H2O + H(+). It catalyses the reaction thymine + FMNH2 + NADH + O2 = (Z)-2-methylureidoacrylate + FMN + NAD(+) + H2O + H(+). Functionally, catalyzes the pyrimidine ring opening between N-3 and C-4 by an unusual flavin hydroperoxide-catalyzed mechanism, adding oxygen atoms in the process to yield ureidoacrylate peracid, that immediately reacts with FMN forming ureidoacrylate and FMN-N(5)-oxide. The FMN-N(5)-oxide reacts spontaneously with NADH to produce FMN. Requires the flavin reductase RutF to regenerate FMN in vivo. The chain is Pyrimidine monooxygenase RutA from Methylorubrum extorquens (strain ATCC 14718 / DSM 1338 / JCM 2805 / NCIMB 9133 / AM1) (Methylobacterium extorquens).